We begin with the raw amino-acid sequence, 105 residues long: Synaptic plasticity regulator PANTS (105 aa).

This sequence belongs to the UPF0545 family. As to quaternary structure, interacts with RTN4 isoform A/Nogo-A; the interaction results in enhanced RTN4-mediated inhibition of AMPA receptor clustering. Also interacts with NCAM1, RANBP2 and CCT8. Rapidly degraded by proteolysis following neuronal stimulation, resulting in increased AMPA receptor clustering. In terms of tissue distribution, in the postnatal brain, expressed diffusely throughout the hippocampus at a low level at 8 weeks (at protein level). At 16 weeks, strongly expressed in the stratum lucidum of the hippocampus (at protein level). In developing and aging brain, expression is strongest in hippocampus, especially in areas CA3 and CA2, throughout the dorsoventral axis.

The protein resides in the synapse. The protein localises to the synaptic cleft. Negatively regulates long-term potentiation and modulates adult synaptic plasticity. Stabilizes the interaction of RTN4 isoform A/Nogo-A with its receptors, inhibiting clustering of postsynaptic AMPA receptors at synaptic sites. Upon neuronal stimulation, degraded at synapses, reducing RTN4 signaling and allowing AMPA receptor clustering at individual synapses. The chain is Synaptic plasticity regulator PANTS from Mus musculus (Mouse).